We begin with the raw amino-acid sequence, 310 residues long: MNLPIVKGEYRKDYNLKHLTWFKVGGNAEIFFKPVDSEDLASFLVQNKQKLPITTFGAGSNIIIRDGGIEGVTIKLGQNFSNIGFTDDGHLIVGSSCLNFSLAKFCQVNAISGFEFLVGIPGTIGGGVAMNAGAYGCEFKDILVRIEAIDFAGNFRTFTNEEIGFKYRGNNLPKDLIILKAVFKVNKGNSEDILARMNEINAARSSTQPIKERTGGSTFANPEGFKSWQLIDKAGLRGYRIGDASISELHCNFMINNGNATAKELEDLGNFVQQKVFEDSGIKLNWEIKRIGKVSSRAWLDHGIQRKIIK.

One can recognise an FAD-binding PCMH-type domain in the interval 23 to 188 (KVGGNAEIFF…LKAVFKVNKG (166 aa)). Arg-168 is a catalytic residue. Ser-217 (proton donor) is an active-site residue. Glu-287 is an active-site residue.

This sequence belongs to the MurB family. It depends on FAD as a cofactor.

The protein localises to the cytoplasm. The enzyme catalyses UDP-N-acetyl-alpha-D-muramate + NADP(+) = UDP-N-acetyl-3-O-(1-carboxyvinyl)-alpha-D-glucosamine + NADPH + H(+). It functions in the pathway cell wall biogenesis; peptidoglycan biosynthesis. Functionally, cell wall formation. The chain is UDP-N-acetylenolpyruvoylglucosamine reductase from Rickettsia bellii (strain OSU 85-389).